The sequence spans 231 residues: MSKLTKRQKTVGDKIDSNKLYALSDALGLVKEFAVAKFDESIDVAVQLGIDAKKSDQVVRGAVVLPNGTGKTKRVAVFAQGAKAEEAKAAGADIVGMDDLAADIKAGKMDFDVVIASPDAMRIVGTLGQILGPRGLMPNPKVGTVTPDVATAVRNAKAGQVQFRVDKAGIVHGTIGRRSFDTAKLQGNLAALVDALIKAKPATSKGVYLKKVAVSSTMGVGVRVDTQSIAA.

The protein belongs to the universal ribosomal protein uL1 family. As to quaternary structure, part of the 50S ribosomal subunit.

In terms of biological role, binds directly to 23S rRNA. The L1 stalk is quite mobile in the ribosome, and is involved in E site tRNA release. Functionally, protein L1 is also a translational repressor protein, it controls the translation of the L11 operon by binding to its mRNA. This Polaromonas naphthalenivorans (strain CJ2) protein is Large ribosomal subunit protein uL1.